The primary structure comprises 449 residues: uncharacterized protein (449 aa).

Disordered stretches follow at residues 1–58 (MVKR…SLSS) and 71–125 (EALE…VVEL). The span at 30 to 46 (KQRDELREKQKRKREDS) shows a compositional bias: basic and acidic residues. A compositionally biased stretch (acidic residues) spans 103-124 (SDDDDDDNEEEDDNGFEDQVVE).

This sequence belongs to the bystin family.

This is an uncharacterized protein from Caenorhabditis elegans.